A 307-amino-acid polypeptide reads, in one-letter code: MTDLHYRCGWVALMGPPNAGKSTLLNALLGQKVTIVTPKPQTTRNQIVGILTDDDAQTIFMDTPGLTQVRGRLSKTMIQAVWQSLNQADIIMPVLDAHLYIRHPEFLDRDLAPVAQALASEERPMIVVVNKVDLFGDKSRMLPLLTRLHEMWPRADIFPISALHKDGLADLVELIRKKLPKGQAQFPEDQISTAPLRFMTAEIVREKLFMHLRQEVPYSVAVDVESWEEDEERGQTVIHATIYVARPMHKAMVIGRAGQSIKAIGTEARKDIQELVGGKVHLELWVKVREHWTEDTAFLRDLGLMAE.

Positions arginine 7–lysine 181 constitute an Era-type G domain. Residues glycine 15–serine 22 form a G1 region. Residue glycine 15 to serine 22 participates in GTP binding. Positions glutamine 41 to asparagine 45 are G2. Positions aspartate 62–glycine 65 are G3. Residues aspartate 62–leucine 66 and asparagine 130–aspartate 133 contribute to the GTP site. The G4 stretch occupies residues asparagine 130–aspartate 133. Positions isoleucine 160–alanine 162 are G5. The KH type-2 domain occupies leucine 212–glutamate 290.

Belongs to the TRAFAC class TrmE-Era-EngA-EngB-Septin-like GTPase superfamily. Era GTPase family. In terms of assembly, monomer.

It is found in the cytoplasm. Its subcellular location is the cell inner membrane. In terms of biological role, an essential GTPase that binds both GDP and GTP, with rapid nucleotide exchange. Plays a role in 16S rRNA processing and 30S ribosomal subunit biogenesis and possibly also in cell cycle regulation and energy metabolism. The sequence is that of GTPase Era from Desulfovibrio desulfuricans (strain ATCC 27774 / DSM 6949 / MB).